Here is a 128-residue protein sequence, read N- to C-terminus: Ribonuclease pancreatic (128 aa).

Positions 1-13 are enriched in basic and acidic residues; it reads KESPAMKFERQHM. Residues 1–26 are disordered; it reads KESPAMKFERQHMDSGSTSSSNPTYC. Residues Lys-7 and Arg-10 each coordinate substrate. His-12 acts as the Proton acceptor in catalysis. The span at 14 to 26 shows a compositional bias: polar residues; it reads DSGSTSSSNPTYC. Cystine bridges form between Cys-26–Cys-84, Cys-40–Cys-95, Cys-58–Cys-110, and Cys-65–Cys-72. Asn-34 carries N-linked (GlcNAc...) asparagine glycosylation. Residue 41-45 participates in substrate binding; that stretch reads KPVNT. A glycan (N-linked (GlcNAc...) asparagine) is linked at Asn-62. Substrate contacts are provided by Lys-66 and Arg-85. Catalysis depends on His-119, which acts as the Proton donor.

This sequence belongs to the pancreatic ribonuclease family. In terms of assembly, monomer. Interacts with and forms tight 1:1 complexes with RNH1. Dimerization of two such complexes may occur. Interaction with RNH1 inhibits this protein. Pancreas.

It is found in the secreted. It catalyses the reaction an [RNA] containing cytidine + H2O = an [RNA]-3'-cytidine-3'-phosphate + a 5'-hydroxy-ribonucleotide-3'-[RNA].. It carries out the reaction an [RNA] containing uridine + H2O = an [RNA]-3'-uridine-3'-phosphate + a 5'-hydroxy-ribonucleotide-3'-[RNA].. In terms of biological role, endonuclease that catalyzes the cleavage of RNA on the 3' side of pyrimidine nucleotides. Acts on single-stranded and double-stranded RNA. The polypeptide is Ribonuclease pancreatic (RNASE1) (Equus caballus (Horse)).